A 122-amino-acid polypeptide reads, in one-letter code: Large ribosomal subunit protein uL14 (122 aa).

This sequence belongs to the universal ribosomal protein uL14 family. Part of the 50S ribosomal subunit. Forms a cluster with proteins L3 and L19. In the 70S ribosome, L14 and L19 interact and together make contacts with the 16S rRNA in bridges B5 and B8.

In terms of biological role, binds to 23S rRNA. Forms part of two intersubunit bridges in the 70S ribosome. In Solibacter usitatus (strain Ellin6076), this protein is Large ribosomal subunit protein uL14.